We begin with the raw amino-acid sequence, 383 residues long: Mannitol-1-phosphate 5-dehydrogenase (383 aa).

Position 3-14 (3-14) interacts with NAD(+); sequence AVHFGAGNIGRG.

Belongs to the mannitol dehydrogenase family.

The catalysed reaction is D-mannitol 1-phosphate + NAD(+) = beta-D-fructose 6-phosphate + NADH + H(+). The chain is Mannitol-1-phosphate 5-dehydrogenase from Lacticaseibacillus casei (strain BL23) (Lactobacillus casei).